The chain runs to 188 residues: CXXC-type zinc finger protein 4 (188 aa).

The segment at 1–20 is disordered; the sequence is MHRNDSQRLGKPGGAPESLQ. Residues 122-163 form a CXXC-type zinc finger; that stretch reads AKKKRKRCGVCVPCKRLINCGVCSSCRNRKTGHQICKFRKCE. Residues C129, C132, C135, C141, C144, C147, C157, and C162 each contribute to the Zn(2+) site.

The protein resides in the cytoplasm. Acts as a negative regulator of the Wnt signaling pathway required for anterior neural structure formation. Binds preferentially to DNA containing cytidine-phosphate-guanosine (CpG) dinucleotides over CpH (H=A, T, and C), hemimethylated-CpG and hemimethylated-hydroxymethyl-CpG. In Xenopus tropicalis (Western clawed frog), this protein is CXXC-type zinc finger protein 4 (cxxc4).